Consider the following 89-residue polypeptide: Small ribosomal subunit protein uS15 (89 aa).

This sequence belongs to the universal ribosomal protein uS15 family. As to quaternary structure, part of the 30S ribosomal subunit. Forms a bridge to the 50S subunit in the 70S ribosome, contacting the 23S rRNA.

One of the primary rRNA binding proteins, it binds directly to 16S rRNA where it helps nucleate assembly of the platform of the 30S subunit by binding and bridging several RNA helices of the 16S rRNA. In terms of biological role, forms an intersubunit bridge (bridge B4) with the 23S rRNA of the 50S subunit in the ribosome. This is Small ribosomal subunit protein uS15 from Polynucleobacter asymbioticus (strain DSM 18221 / CIP 109841 / QLW-P1DMWA-1) (Polynucleobacter necessarius subsp. asymbioticus).